Here is a 363-residue protein sequence, read N- to C-terminus: Aminomethyltransferase (363 aa).

The protein belongs to the GcvT family. As to quaternary structure, the glycine cleavage system is composed of four proteins: P, T, L and H.

The catalysed reaction is N(6)-[(R)-S(8)-aminomethyldihydrolipoyl]-L-lysyl-[protein] + (6S)-5,6,7,8-tetrahydrofolate = N(6)-[(R)-dihydrolipoyl]-L-lysyl-[protein] + (6R)-5,10-methylene-5,6,7,8-tetrahydrofolate + NH4(+). Functionally, the glycine cleavage system catalyzes the degradation of glycine. The polypeptide is Aminomethyltransferase (Dechloromonas aromatica (strain RCB)).